The chain runs to 374 residues: Alanine racemase (374 aa).

The Proton acceptor; specific for D-alanine role is filled by lysine 35. Lysine 35 is subject to N6-(pyridoxal phosphate)lysine. Residue arginine 133 participates in substrate binding. The active-site Proton acceptor; specific for L-alanine is the tyrosine 264. Residue methionine 312 participates in substrate binding.

This sequence belongs to the alanine racemase family. It depends on pyridoxal 5'-phosphate as a cofactor.

It catalyses the reaction L-alanine = D-alanine. It participates in amino-acid biosynthesis; D-alanine biosynthesis; D-alanine from L-alanine: step 1/1. In terms of biological role, catalyzes the interconversion of L-alanine and D-alanine. May also act on other amino acids. The polypeptide is Alanine racemase (alr) (Thermobifida fusca (strain YX)).